Reading from the N-terminus, the 676-residue chain is Pentatricopeptide repeat-containing protein ATP4 homolog, chloroplastic (676 aa).

A chloroplast-targeting transit peptide spans 1–73 (MASPSSLLSW…NSPRAAGLAR (73 aa)). Residues 17 to 58 (LSFQPKNPSPSPATARVSVQDPPPPPSDANPSPGRSSNTSRY) are disordered. PPR repeat units follow at residues 148–182 (EVIL…GVQP), 183–217 (DNAT…GCSP), 218–252 (DMLT…KWQL), 253–287 (DPVI…GVKP), 288–322 (NLVV…EAVP), 323–353 (NKAT…MKDE), 358–388 (DVVL…MKAS), 396–430 (DSWS…GFKP), 431–465 (NIFI…GITP), and 532–566 (RMPY…GIYS). Residues 578–662 (LHLRGLSVGA…WFLTTSVAAR (85 aa)) form the Smr domain.

It belongs to the PPR family. P subfamily.

Its subcellular location is the plastid. The protein resides in the chloroplast. Involved in translation and accumulation of chloroplast ATP synthase subunits. The polypeptide is Pentatricopeptide repeat-containing protein ATP4 homolog, chloroplastic (Oryza sativa subsp. japonica (Rice)).